The chain runs to 643 residues: Threonine--tRNA ligase (643 aa).

The 61-residue stretch at 1–61 (MIKVTLKDGS…KEDVSLSICT (61 aa)) folds into the TGS domain. The segment at 240–540 (DHNKLGRELK…LIEKYAGAFP (301 aa)) is catalytic. Zn(2+) contacts are provided by Cys335, His386, and His517.

This sequence belongs to the class-II aminoacyl-tRNA synthetase family. Homodimer. Zn(2+) is required as a cofactor.

It is found in the cytoplasm. It catalyses the reaction tRNA(Thr) + L-threonine + ATP = L-threonyl-tRNA(Thr) + AMP + diphosphate + H(+). Functionally, catalyzes the attachment of threonine to tRNA(Thr) in a two-step reaction: L-threonine is first activated by ATP to form Thr-AMP and then transferred to the acceptor end of tRNA(Thr). Also edits incorrectly charged L-seryl-tRNA(Thr). The polypeptide is Threonine--tRNA ligase (Clostridium botulinum (strain Eklund 17B / Type B)).